Reading from the N-terminus, the 235-residue chain is Ribonuclease PH (235 aa).

Residues Arg86 and 124 to 126 (GTR) contribute to the phosphate site.

Belongs to the RNase PH family. In terms of assembly, homohexameric ring arranged as a trimer of dimers.

The enzyme catalyses tRNA(n+1) + phosphate = tRNA(n) + a ribonucleoside 5'-diphosphate. Its function is as follows. Phosphorolytic 3'-5' exoribonuclease that plays an important role in tRNA 3'-end maturation. Removes nucleotide residues following the 3'-CCA terminus of tRNAs; can also add nucleotides to the ends of RNA molecules by using nucleoside diphosphates as substrates, but this may not be physiologically important. Probably plays a role in initiation of 16S rRNA degradation (leading to ribosome degradation) during starvation. The sequence is that of Ribonuclease PH from Francisella tularensis subsp. novicida (strain U112).